We begin with the raw amino-acid sequence, 315 residues long: Ribosomal RNA small subunit methyltransferase H (315 aa).

S-adenosyl-L-methionine contacts are provided by residues 33 to 35 (GGH), Asp52, Phe84, Asp106, and Gln113. Residues 290–315 (PITASTSELENNNRSHSAKLRVAEKL) form a disordered region. Positions 292 to 304 (TASTSELENNNRS) are enriched in polar residues.

Belongs to the methyltransferase superfamily. RsmH family.

Its subcellular location is the cytoplasm. It carries out the reaction cytidine(1402) in 16S rRNA + S-adenosyl-L-methionine = N(4)-methylcytidine(1402) in 16S rRNA + S-adenosyl-L-homocysteine + H(+). Functionally, specifically methylates the N4 position of cytidine in position 1402 (C1402) of 16S rRNA. In Lactobacillus helveticus (strain DPC 4571), this protein is Ribosomal RNA small subunit methyltransferase H.